The following is a 69-amino-acid chain: Beta-defensin 1 (69 aa).

The first 21 residues, 1-21, serve as a signal peptide directing secretion; the sequence is MKTHYFLLVMLFFLFSQMELG. The propeptide occupies 22–32; sequence AGILTSLGRRT. 3 disulfide bridges follow: cysteine 37–cysteine 66, cysteine 44–cysteine 59, and cysteine 49–cysteine 67.

Belongs to the beta-defensin family. In terms of assembly, monomer. Homodimer. In terms of tissue distribution, highly expressed in kidney.

It is found in the secreted. The protein localises to the membrane. Its function is as follows. Has bactericidal activity. May act as a ligand for C-C chemokine receptor CCR6. Positively regulates the sperm motility and bactericidal activity in a CCR6-dependent manner. Binds to CCR6 and triggers Ca2+ mobilization in the sperm which is important for its motility. The polypeptide is Beta-defensin 1 (Defb1) (Rattus norvegicus (Rat)).